The following is a 165-amino-acid chain: Nuclear cap-binding protein subunit 2 (165 aa).

MRNA is bound by residues Tyr19, Tyr42, 111–115 (RADWD), 122–126 (RQYGR), and 132–133 (QV). The region spanning 39-117 (HTLYVGNLSF…RIIRADWDAG (79 aa)) is the RRM domain. A disordered region spans residues 144–165 (ARGGYGKLAQQHRPTEAIRNTF).

Belongs to the RRM NCBP2 family. Component of the nuclear cap-binding complex (CBC), a heterodimer composed of ncbp1/cbp80 and ncbp2/cbp20 that interacts with m7GpppG-capped RNA.

The protein resides in the nucleus. The protein localises to the cytoplasm. Functionally, component of the cap-binding complex (CBC), which binds co-transcriptionally to the 5' cap of pre-mRNAs and is involved in various processes such as pre-mRNA splicing, translation regulation, nonsense-mediated mRNA decay, RNA-mediated gene silencing (RNAi) by microRNAs (miRNAs) and mRNA export. The CBC complex is involved in mRNA export from the nucleus, leading to the recruitment of the mRNA export machinery to the 5' end of mRNA and to mRNA export in a 5' to 3' direction through the nuclear pore. The CBC complex is also involved in mediating U snRNA and intronless mRNAs export from the nucleus. The CBC complex is essential for a pioneer round of mRNA translation, before steady state translation when the CBC complex is replaced by cytoplasmic cap-binding protein eIF4E. The pioneer round of mRNA translation mediated by the CBC complex plays a central role in nonsense-mediated mRNA decay (NMD), NMD only taking place in mRNAs bound to the CBC complex, but not on eIF4E-bound mRNAs. The CBC complex enhances NMD in mRNAs containing at least one exon-junction complex (EJC), promoting the interaction between upf1 and upf2. The CBC complex is also involved in 'failsafe' NMD, which is independent of the EJC complex, while it does not participate in Staufen-mediated mRNA decay (SMD). During cell proliferation, the CBC complex is also involved in microRNAs (miRNAs) biogenesis via its interaction with srrt/ars2, thereby being required for miRNA-mediated RNA interference. The CBC complex also acts as a negative regulator of parn, thereby acting as an inhibitor of mRNA deadenylation. In the CBC complex, ncbp2/cbp20 recognizes and binds capped RNAs (m7GpppG-capped RNA) but requires ncbp1/cbp80 to stabilize the movement of its N-terminal loop and lock the CBC into a high affinity cap-binding state with the cap structure. The conventional cap-binding complex with NCBP2 binds both small nuclear RNA (snRNA) and messenger (mRNA) and is involved in their export from the nucleus. The chain is Nuclear cap-binding protein subunit 2 (ncbp2) from Siniperca chuatsi (Mandarin fish).